Consider the following 203-residue polypeptide: NAD(P)H dehydrogenase (quinone) (203 aa).

Residues 3 to 194 enclose the Flavodoxin-like domain; it reads VLIVYYSMYG…AGARFQGRYV (192 aa). FMN is bound by residues 9-14 and 82-84; these read SMYGHI and TRF. Tyrosine 11 is a binding site for NAD(+). Tryptophan 102 contributes to the substrate binding site. Residues 117–123 and histidine 138 each bind FMN; that span reads SSATQHG.

Belongs to the WrbA family. The cofactor is FMN.

It catalyses the reaction a quinone + NADH + H(+) = a quinol + NAD(+). It carries out the reaction a quinone + NADPH + H(+) = a quinol + NADP(+). This is NAD(P)H dehydrogenase (quinone) from Geobacter sulfurreducens (strain ATCC 51573 / DSM 12127 / PCA).